We begin with the raw amino-acid sequence, 172 residues long: RNA pyrophosphohydrolase (172 aa).

A Nudix hydrolase domain is found at 6 to 149 (GYRLNVGIVI…KRDVYRRAMK (144 aa)). Positions 38–59 (GGIDDGETPEQAMFRELYEEVG) match the Nudix box motif.

The protein belongs to the Nudix hydrolase family. RppH subfamily. A divalent metal cation is required as a cofactor.

In terms of biological role, accelerates the degradation of transcripts by removing pyrophosphate from the 5'-end of triphosphorylated RNA, leading to a more labile monophosphorylated state that can stimulate subsequent ribonuclease cleavage. The polypeptide is RNA pyrophosphohydrolase (Vibrio vulnificus (strain CMCP6)).